Here is a 343-residue protein sequence, read N- to C-terminus: MTLNSLPIFLVLISGIFCQYDYGPADDYGYDPFGPSTAVCAPECNCPLSYPTAMYCDNLKLKTIPIVPSGIKYLYLRNNMIEAIEENTFDNVTDLQWLILDHNHLENSKIKGRVFSKLKNLKKLHINYNNLTEAVGPLPKTLDDLQLSHNKITKVNPGALEGLVNLTVIHLQNNQLKTDSISGAFKGLNSLLYLDLSFNQLTKLPTGLPHSLLMLYFDNNQISNIPDEYFQGFKTLQYLRLSHNKLTDSGIPGNVFNITSLVELDLSFNQLKSIPTVSENLENFYLQVNKINKFPLSSFCKVVGPLTYSKITHLRLDGNNLTRADLPQEMYNCLRVAADISLE.

The N-terminal stretch at Met-1–Cys-18 is a signal peptide. Gln-19 is subject to Pyrrolidone carboxylic acid. Tyr-20 and Tyr-22 each carry sulfotyrosine. The LRRNT domain maps to Asp-31–Ser-69. 8 LRR repeats span residues Gly-70–Asn-91, Asp-94–Lys-117, Asn-120–Lys-140, Thr-141–Gly-162, Asn-165–Lys-186, Ser-190–Ser-211, Leu-212–Gly-232, and Thr-235–Val-255. The N-linked (GlcNAc...) (keratan sulfate) asparagine glycan is linked to Asn-91. A glycan (N-linked (GlcNAc...) (keratan sulfate) asparagine) is linked at Asn-130. N-linked (GlcNAc...) (keratan sulfate) asparagine glycosylation is present at Asn-165. Asn-257 is a glycosylation site (N-linked (GlcNAc...) (keratan sulfate) asparagine). LRR repeat units lie at residues Ser-260–Leu-281, Glu-282–Lys-301, and Lys-310–Met-330. Cys-300 and Cys-333 are disulfide-bonded. N-linked (GlcNAc...) asparagine glycosylation is present at Asn-320.

This sequence belongs to the small leucine-rich proteoglycan (SLRP) family. SLRP class II subfamily. Binds to laminin. Contains keratan sulfate. As to expression, cornea and other tissues.

Its subcellular location is the secreted. The protein resides in the extracellular space. It is found in the extracellular matrix. This chain is Lumican (LUM), found in Gallus gallus (Chicken).